Here is a 283-residue protein sequence, read N- to C-terminus: Large ribosomal subunit protein uL2c (283 aa).

The tract at residues 229-274 (GVVMNPIDHPHGGGEGKVPIGRKKPLTPWGHPALGRKSRKRRKYSD) is disordered. The segment covering 262–271 (LGRKSRKRRK) has biased composition (basic residues).

The protein belongs to the universal ribosomal protein uL2 family. In terms of assembly, part of the 50S ribosomal subunit.

It localises to the plastid. The chain is Large ribosomal subunit protein uL2c (rpl2) from Aneura mirabilis (Parasitic liverwort).